The primary structure comprises 336 residues: Inositol 2-dehydrogenase (336 aa).

The protein belongs to the Gfo/Idh/MocA family. As to quaternary structure, homotetramer.

The enzyme catalyses myo-inositol + NAD(+) = scyllo-inosose + NADH + H(+). Its function is as follows. Involved in the oxidation of myo-inositol (MI) to 2-keto-myo-inositol (2KMI or 2-inosose). The chain is Inositol 2-dehydrogenase from Pseudomonas fluorescens (strain ATCC BAA-477 / NRRL B-23932 / Pf-5).